A 432-amino-acid chain; its full sequence is Argininosuccinate lyase (432 aa).

It belongs to the lyase 1 family. Argininosuccinate lyase subfamily.

The protein localises to the cytoplasm. It carries out the reaction 2-(N(omega)-L-arginino)succinate = fumarate + L-arginine. It participates in amino-acid biosynthesis; L-arginine biosynthesis; L-arginine from L-ornithine and carbamoyl phosphate: step 3/3. This Xanthomonas axonopodis pv. citri (strain 306) protein is Argininosuccinate lyase.